We begin with the raw amino-acid sequence, 793 residues long: MKISESWLRTWVNPAIDSTTLADQLTMLGLEVDELAPVAKPFTGVVVGEVLTVEQHPDADRLRVTTVNIGNGEPLQIVCGAPNLRVGMKAPVATIGAVLPGEFKIKKGKLRGIESQGMLCGASEIDLEDKIDGLLELPEDAPVGLNIREYLKLDDNIIDISITPNRGDCFSIRGIARDLAVLNQLEVTPPDIQAVEATLNEQKQVHLETEGAPRYLGRIIKNVNVKATTPEWMAQALAASGIRTHSILVDVTNYVLMELGQPMHAFDLAKLNGAIHVRQASAQEKLTLLNDQNVELNEDIMVIADDAKVLAIAGIMGGLESSVTDDTQDIFLESAFFAPLAIAGRARRFGLHTDSSQRFERGVDFELPLLAMNRASQLIQQFAGGEFGPITVAENTALLPKREAIELNQQQVSQLLGYEVETDFIADALTRLGCQVAVKAQGEWVVVAPSHRFDITIYQDLIEEVARIHGYDNIQIRLPKIDVKLAKYQDHLELGQLRQTIATLGYQEAISFSFADLKLEKQLNPDVNPLALANPISSDLAVMRSTLLSSLIPCVQHNLNRQQNRVRFFELGLRFDYQNAASIHDLQQTPTLALIAVGSSVPEQWHGKTQPMDFFDLKHDIEQILAAGRVKVEYVRSERAWLHPGQSAEILIAGQSIGYLGRLHPSLENDLDLGVTWVAELDQQAILQSYVSNFTELSRFPSVRRDIALLISDKINVSDIQQLIKQTGGDLLDSTWLFDVYTGQGVEEGKRSLAFALLWQHPSRTLEDAEIKSGMDNIIEVLENTYQATLRAS.

The region spanning 39–148 is the tRNA-binding domain; the sequence is AKPFTGVVVG…EDAPVGLNIR (110 aa). The B5 domain occupies 400–476; it reads PKREAIELNQ…RIHGYDNIQI (77 aa). Mg(2+) is bound by residues Asp454, Asp460, Glu463, and Glu464. The FDX-ACB domain occupies 698–791; the sequence is SRFPSVRRDI…LENTYQATLR (94 aa).

Belongs to the phenylalanyl-tRNA synthetase beta subunit family. Type 1 subfamily. Tetramer of two alpha and two beta subunits. Mg(2+) is required as a cofactor.

Its subcellular location is the cytoplasm. The enzyme catalyses tRNA(Phe) + L-phenylalanine + ATP = L-phenylalanyl-tRNA(Phe) + AMP + diphosphate + H(+). The sequence is that of Phenylalanine--tRNA ligase beta subunit from Acinetobacter baylyi (strain ATCC 33305 / BD413 / ADP1).